A 204-amino-acid polypeptide reads, in one-letter code: Gellan lyase (204 aa).

As to quaternary structure, multimer.

It is found in the secreted. The catalysed reaction is Eliminative cleavage of beta-D-glucopyranosyl-(1-&gt;4)-beta-D-glucopyranosyluronate bonds of gellan backbone releasing tetrasaccharides containing a 4-deoxy-4,5-unsaturated D-glucopyranosyluronic acid at the non-reducing end. The tetrasaccharide produced from deacetylated gellan is beta-D-4-deoxy-Delta(4)-GlcAp-(1-&gt;4)-beta-D-Glcp-(1-&gt;4)-alpha-L-Rhap-(1-&gt;3)-beta-D-Glcp.. Its activity is regulated as follows. Activity is stimulated by zinc, potassium, lithium, cobalt, sodium, calcium, iron, manganase, magnesium and mercury ions at a concentration of 1 mM, but inhibited by copper ions at a concentration of 1 mM. Activity is inhibited by potassium, sodium and magnesium ions at a concentration of 1 M. Activity is inhibited by urea, EDTA, dithiothreitol, p-CMB, PSF, natrium lauryl sulfate and N-bromosuccinimide. Its function is as follows. Cleaves the glycosidic bonds of gellan backbone and releases tetrasaccharide units of glucuronyl-glucosyl-rhamnosyl-glucose with unsaturated glucuronic acid at the non-reducing terminal. The enzyme is highly specific to the heteropolysaccharide gellan. In Geobacillus stearothermophilus (Bacillus stearothermophilus), this protein is Gellan lyase.